The primary structure comprises 84 residues: DNA-directed RNA polymerase subunit Rpo5 (84 aa).

Belongs to the archaeal Rpo5/eukaryotic RPB5 RNA polymerase subunit family. As to quaternary structure, part of the 13-subunit RNA polymerase complex.

Its subcellular location is the cytoplasm. It catalyses the reaction RNA(n) + a ribonucleoside 5'-triphosphate = RNA(n+1) + diphosphate. Functionally, DNA-dependent RNA polymerase (RNAP) catalyzes the transcription of DNA into RNA using the four ribonucleoside triphosphates as substrates. The protein is DNA-directed RNA polymerase subunit Rpo5 of Saccharolobus solfataricus (strain ATCC 35092 / DSM 1617 / JCM 11322 / P2) (Sulfolobus solfataricus).